Reading from the N-terminus, the 373-residue chain is Flagellar P-ring protein (373 aa).

A signal peptide spans 1–26; that stretch reads MKLFFRFLTLVAVLAMSLADVAPAWA.

It belongs to the FlgI family. The basal body constitutes a major portion of the flagellar organelle and consists of four rings (L,P,S, and M) mounted on a central rod.

It localises to the periplasm. The protein localises to the bacterial flagellum basal body. In terms of biological role, assembles around the rod to form the L-ring and probably protects the motor/basal body from shearing forces during rotation. This Rhizobium leguminosarum bv. trifolii (strain WSM2304) protein is Flagellar P-ring protein.